Here is a 248-residue protein sequence, read N- to C-terminus: 2,3-bisphosphoglycerate-dependent phosphoglycerate mutase (248 aa).

Substrate contacts are provided by residues 8–15 (RHGESTWN), 21–22 (TG), Arg60, 87–90 (ERHY), Lys98, 114–115 (RR), and 183–184 (GN). The active-site Tele-phosphohistidine intermediate is His9. The Proton donor/acceptor role is filled by Glu87.

This sequence belongs to the phosphoglycerate mutase family. BPG-dependent PGAM subfamily. Homodimer.

It carries out the reaction (2R)-2-phosphoglycerate = (2R)-3-phosphoglycerate. Its pathway is carbohydrate degradation; glycolysis; pyruvate from D-glyceraldehyde 3-phosphate: step 3/5. In terms of biological role, catalyzes the interconversion of 2-phosphoglycerate and 3-phosphoglycerate. This is 2,3-bisphosphoglycerate-dependent phosphoglycerate mutase from Burkholderia cenocepacia (strain ATCC BAA-245 / DSM 16553 / LMG 16656 / NCTC 13227 / J2315 / CF5610) (Burkholderia cepacia (strain J2315)).